The following is a 279-amino-acid chain: Proteasome subunit beta (279 aa).

Positions 1–51 (MTFDASGRLPEAFLTPGGSSFMDFLAGHAPDLLPGRRSLGTGDLSKDVPHG) are cleaved as a propeptide — removed in mature form; by autocatalysis. Residue Thr-52 is the Nucleophile of the active site.

Belongs to the peptidase T1B family. In terms of assembly, the 20S proteasome core is composed of 14 alpha and 14 beta subunits that assemble into four stacked heptameric rings, resulting in a barrel-shaped structure. The two inner rings, each composed of seven catalytic beta subunits, are sandwiched by two outer rings, each composed of seven alpha subunits. The catalytic chamber with the active sites is on the inside of the barrel. Has a gated structure, the ends of the cylinder being occluded by the N-termini of the alpha-subunits. Is capped by the proteasome-associated ATPase, ARC.

The protein localises to the cytoplasm. The enzyme catalyses Cleavage of peptide bonds with very broad specificity.. The protein operates within protein degradation; proteasomal Pup-dependent pathway. Its activity is regulated as follows. The formation of the proteasomal ATPase ARC-20S proteasome complex, likely via the docking of the C-termini of ARC into the intersubunit pockets in the alpha-rings, may trigger opening of the gate for substrate entry. Interconversion between the open-gate and close-gate conformations leads to a dynamic regulation of the 20S proteasome proteolysis activity. Functionally, component of the proteasome core, a large protease complex with broad specificity involved in protein degradation. This chain is Proteasome subunit beta, found in Kribbella flavida (strain DSM 17836 / JCM 10339 / NBRC 14399).